The following is a 146-amino-acid chain: NADH-quinone oxidoreductase subunit A (146 aa).

Helical transmembrane passes span Phe-14–Phe-34, Phe-66–Trp-86, and Val-96–Val-116.

Belongs to the complex I subunit 3 family. NDH-1 is composed of 13 different subunits. Subunits NuoA, H, J, K, L, M, N constitute the membrane sector of the complex.

The protein localises to the cell inner membrane. The enzyme catalyses a quinone + NADH + 5 H(+)(in) = a quinol + NAD(+) + 4 H(+)(out). Functionally, NDH-1 shuttles electrons from NADH, via FMN and iron-sulfur (Fe-S) centers, to quinones in the respiratory chain. The immediate electron acceptor for the enzyme in this species is believed to be ubiquinone. Couples the redox reaction to proton translocation (for every two electrons transferred, four hydrogen ions are translocated across the cytoplasmic membrane), and thus conserves the redox energy in a proton gradient. This is NADH-quinone oxidoreductase subunit A from Serratia proteamaculans (strain 568).